Here is a 53-residue protein sequence, read N- to C-terminus: Small, acid-soluble spore protein K (53 aa).

The disordered stretch occupies residues 1 to 53 (MRNKERNFPNQNNNKFEGEPRAKAEYASKRANGTTNTHPQERMHASGKRDDNF). Composition is skewed to basic and acidic residues over residues 16–28 (FEGE…EYAS) and 39–53 (PQER…DDNF).

The protein belongs to the SspK family.

Its subcellular location is the spore core. The protein is Small, acid-soluble spore protein K of Geobacillus sp. (strain WCH70).